Here is a 338-residue protein sequence, read N- to C-terminus: MIEADRLIHAEPQGIEERDEQIDRAMRPKMLDEYTGQDDSRAQLKIFIQAAQNRDEALDHMLIYGPPGLGKTTLAMIVANEMGVNIKSTSGPVLEKAGDLAALLTNLEPGDVLFIDEIHRLSSVVEEILYPAMEDYQLDIMIGEGPAARSIKLDLPPFTLIGATTRAGALTSPLRARFGIPLRLEFYNVKDLSSIVTRSANVLELPIDEAGAIELARRSRGTPRIANRLLRRVRDFAEVKHDGEITKQVAELALDMLDIDSEGFDYMDRKLLLAIIDKFMGGPVGLDNLAAAIGEERETIEDVLEPFLIQQGFIQRTPRGRIATDRAYRHFDIIQPEK.

The segment at 4-187 (ADRLIHAEPQ…FGIPLRLEFY (184 aa)) is large ATPase domain (RuvB-L). Residues arginine 27, glycine 68, lysine 71, threonine 72, threonine 73, 134–136 (EDY), arginine 177, tyrosine 187, and arginine 224 each bind ATP. Position 72 (threonine 72) interacts with Mg(2+). The tract at residues 188-258 (NVKDLSSIVT…VAELALDMLD (71 aa)) is small ATPAse domain (RuvB-S). The segment at 261–338 (SEGFDYMDRK…RHFDIIQPEK (78 aa)) is head domain (RuvB-H). Residues arginine 297, arginine 316, and arginine 321 each contribute to the DNA site.

This sequence belongs to the RuvB family. In terms of assembly, homohexamer. Forms an RuvA(8)-RuvB(12)-Holliday junction (HJ) complex. HJ DNA is sandwiched between 2 RuvA tetramers; dsDNA enters through RuvA and exits via RuvB. An RuvB hexamer assembles on each DNA strand where it exits the tetramer. Each RuvB hexamer is contacted by two RuvA subunits (via domain III) on 2 adjacent RuvB subunits; this complex drives branch migration. In the full resolvosome a probable DNA-RuvA(4)-RuvB(12)-RuvC(2) complex forms which resolves the HJ.

The protein resides in the cytoplasm. It catalyses the reaction ATP + H2O = ADP + phosphate + H(+). Functionally, the RuvA-RuvB-RuvC complex processes Holliday junction (HJ) DNA during genetic recombination and DNA repair, while the RuvA-RuvB complex plays an important role in the rescue of blocked DNA replication forks via replication fork reversal (RFR). RuvA specifically binds to HJ cruciform DNA, conferring on it an open structure. The RuvB hexamer acts as an ATP-dependent pump, pulling dsDNA into and through the RuvAB complex. RuvB forms 2 homohexamers on either side of HJ DNA bound by 1 or 2 RuvA tetramers; 4 subunits per hexamer contact DNA at a time. Coordinated motions by a converter formed by DNA-disengaged RuvB subunits stimulates ATP hydrolysis and nucleotide exchange. Immobilization of the converter enables RuvB to convert the ATP-contained energy into a lever motion, pulling 2 nucleotides of DNA out of the RuvA tetramer per ATP hydrolyzed, thus driving DNA branch migration. The RuvB motors rotate together with the DNA substrate, which together with the progressing nucleotide cycle form the mechanistic basis for DNA recombination by continuous HJ branch migration. Branch migration allows RuvC to scan DNA until it finds its consensus sequence, where it cleaves and resolves cruciform DNA. In Shewanella woodyi (strain ATCC 51908 / MS32), this protein is Holliday junction branch migration complex subunit RuvB.